Consider the following 179-residue polypeptide: ATP synthase subunit b (179 aa).

Residues 27-47 (TAITFLVMLAVLAKFAWGPIV) traverse the membrane as a helical segment.

Belongs to the ATPase B chain family. As to quaternary structure, F-type ATPases have 2 components, F(1) - the catalytic core - and F(0) - the membrane proton channel. F(1) has five subunits: alpha(3), beta(3), gamma(1), delta(1), epsilon(1). F(0) has three main subunits: a(1), b(2) and c(10-14). The alpha and beta chains form an alternating ring which encloses part of the gamma chain. F(1) is attached to F(0) by a central stalk formed by the gamma and epsilon chains, while a peripheral stalk is formed by the delta and b chains.

The protein localises to the cell inner membrane. Functionally, f(1)F(0) ATP synthase produces ATP from ADP in the presence of a proton or sodium gradient. F-type ATPases consist of two structural domains, F(1) containing the extramembraneous catalytic core and F(0) containing the membrane proton channel, linked together by a central stalk and a peripheral stalk. During catalysis, ATP synthesis in the catalytic domain of F(1) is coupled via a rotary mechanism of the central stalk subunits to proton translocation. Its function is as follows. Component of the F(0) channel, it forms part of the peripheral stalk, linking F(1) to F(0). This chain is ATP synthase subunit b, found in Anaeromyxobacter dehalogenans (strain 2CP-C).